A 156-amino-acid chain; its full sequence is Ribosomal RNA large subunit methyltransferase H (156 aa).

S-adenosyl-L-methionine is bound by residues L73, G104, and 123-128; that span reads ISSMTL.

The protein belongs to the RNA methyltransferase RlmH family. As to quaternary structure, homodimer.

It localises to the cytoplasm. It catalyses the reaction pseudouridine(1915) in 23S rRNA + S-adenosyl-L-methionine = N(3)-methylpseudouridine(1915) in 23S rRNA + S-adenosyl-L-homocysteine + H(+). In terms of biological role, specifically methylates the pseudouridine at position 1915 (m3Psi1915) in 23S rRNA. The protein is Ribosomal RNA large subunit methyltransferase H of Burkholderia multivorans (strain ATCC 17616 / 249).